Reading from the N-terminus, the 209-residue chain is Ribonuclease HII (209 aa).

An RNase H type-2 domain is found at 25-209 (RRIAGIDEAG…ATFRGVREYL (185 aa)). Positions 31, 32, and 123 each coordinate a divalent metal cation.

The protein belongs to the RNase HII family. The cofactor is Mn(2+). Requires Mg(2+) as cofactor.

It localises to the cytoplasm. It carries out the reaction Endonucleolytic cleavage to 5'-phosphomonoester.. Its function is as follows. Endonuclease that specifically degrades the RNA of RNA-DNA hybrids. The sequence is that of Ribonuclease HII from Syntrophotalea carbinolica (strain DSM 2380 / NBRC 103641 / GraBd1) (Pelobacter carbinolicus).